We begin with the raw amino-acid sequence, 1068 residues long: DNA-directed RNA polymerase subunit beta (1068 aa).

It belongs to the RNA polymerase beta chain family. In plastids the minimal PEP RNA polymerase catalytic core is composed of four subunits: alpha, beta, beta', and beta''. When a (nuclear-encoded) sigma factor is associated with the core the holoenzyme is formed, which can initiate transcription.

The protein resides in the plastid. It localises to the chloroplast. The catalysed reaction is RNA(n) + a ribonucleoside 5'-triphosphate = RNA(n+1) + diphosphate. In terms of biological role, DNA-dependent RNA polymerase catalyzes the transcription of DNA into RNA using the four ribonucleoside triphosphates as substrates. This is DNA-directed RNA polymerase subunit beta from Staurastrum punctulatum (Green alga).